Reading from the N-terminus, the 757-residue chain is MMRGFKQRLIKKTTGSSSSSSSKKKDKEKEKEKSSTTSSTSKKPASASSSSHGTTHSSASSTGSKSTTEKGKQSGSVPSQGKHHSSSTSKTKTATTPSSSSSSSRSSSVSRSGSSSTKKTSSRKGQEQSKQSQQPSQSQKQGSSSSSAAIMNPTPVLTVTKDDKSTSGEDHAHPTLLGAVSAVPSSPISNASGTAVSSDVENGNSNNNNMNINTSNTQDANHASSQSIDIPRSSHSFERLPTPTKLNPDTDLELIKTPQRHSSSRFEPSRYTPLTKLPNFNEVSPEERIPLFIAKVDQCNTMFDFNDPSFDIQGKEIKRSTLDELIEFLVTNRFTYTNEMYAHVVNMFKINLFRPIPPPVNPVGDIYDPDEDEPVNELAWPHMQAVYEFFLRFVESPDFNHQIAKQYIDQDFILKLLELFDSEDIRERDCLKTTLHRIYGKFLSLRSFIRRSMNNIFLQFIYETEKFNGVAELLEILGSIINGFALPLKEEHKVFLVRILIPLHKVRCLSLYHPQLAYCIVQFLEKDPLLTEEVVMGLLRYWPKINSTKEIMFLNEIEDIFEVIEPLEFIKVEVPLFVQLAKCISSPHFQVAEKVLSYWNNEYFLNLCIENAEVILPIIFPALYELTSQLELDTANGEDSISDPYMLVEQAINSGSWNRAIHAMAFKALKIFLETNPVLYENCNALYLSSVKETQQRKVQREENWSKLEEYVKNLRINNDKDQYTIKNPELRNSFNTASENNTLNEENENDCDSEIQ.

Positions 1–11 (MMRGFKQRLIK) are enriched in basic residues. 2 disordered regions span residues 1–172 (MMRG…EDHA) and 188–250 (ISNA…NPDT). Residues 12-21 (KTTGSSSSSS) are compositionally biased toward low complexity. Basic and acidic residues predominate over residues 23–34 (KKKDKEKEKEKS). Low complexity-rich tracts occupy residues 35–66 (STTS…GSKS), 86–119 (SSTS…STKK), and 128–147 (QSKQ…SSSS). Over residues 160–172 (TKDDKSTSGEDHA) the composition is skewed to basic and acidic residues. Over residues 197-216 (SSDVENGNSNNNNMNINTSN) the composition is skewed to low complexity. Polar residues predominate over residues 217 to 228 (TQDANHASSQSI). Residues T242 and T257 each carry the phosphothreonine modification. The disordered stretch occupies residues 734–757 (SFNTASENNTLNEENENDCDSEIQ). Residues 746–757 (EENENDCDSEIQ) are compositionally biased toward acidic residues.

This sequence belongs to the phosphatase 2A regulatory subunit B family. PP2A consists of a common heterodimeric core enzyme, composed of a 36 kDa catalytic subunit (subunit C) and a 65 kDa constant regulatory subunit (PR65 or subunit A), that associates with a variety of regulatory subunits. Proteins that associate with the core dimer include three families of regulatory subunits B (the R2/B/PR55/B55, R3/B''/PR72/PR130/PR59 and R5/B'/B56 families), the 48 kDa variable regulatory subunit, viral proteins, and cell signaling molecules.

The protein localises to the cytoplasm. It localises to the nucleus. Its function is as follows. The B regulatory subunit might modulate substrate selectivity and catalytic activity, and might also direct the localization of the catalytic enzyme to a particular subcellular compartment. In terms of biological role, multicopy suppressor of ROX3 and HSP60. In Saccharomyces cerevisiae (strain ATCC 204508 / S288c) (Baker's yeast), this protein is Serine/threonine-protein phosphatase 2A 56 kDa regulatory subunit delta isoform (RTS1).